The primary structure comprises 364 residues: Protein leg1a (364 aa).

A signal peptide spans 1–22; the sequence is MSEMGFLRSVAAVLLLAVFSHA. N70 carries N-linked (GlcNAc...) asparagine glycosylation.

It belongs to the LEG1 family. Detected in all tissues tested, with the highest levels in serum (at protein level). At mRNA level, only expressed in liver.

It is found in the secreted. In terms of biological role, important for early development of liver, exocrine pancreas and intestine, probably through cell cycle regulation. In liver, its function is partially redundant with leg1b function. The chain is Protein leg1a from Danio rerio (Zebrafish).